The primary structure comprises 262 residues: ABSCISIC ACID-INSENSITIVE 5-like protein 3 (262 aa).

A phosphoserine mark is found at Ser21, Ser43, and Ser66. The residue at position 104 (Thr104) is a Phosphothreonine. Residues 190 to 253 (VERRQKRMIK…SEPPPDPKWK (64 aa)) enclose the bZIP domain. Positions 192–211 (RRQKRMIKNRESAARSRARK) are basic motif. The interval 218–232 (LEIKVSRLEEENEKL) is leucine-zipper. Basic and acidic residues predominate over residues 239 to 252 (EKILPSEPPPDPKW). Positions 239 to 262 (EKILPSEPPPDPKWKLRRTNSASL) are disordered.

It belongs to the bZIP family. ABI5 subfamily. In terms of assembly, DNA-binding heterodimer with ABI5/DPBF1, DPBF2 or AREB3/DPBF3. Interacts with the AFP proteins AFP2, AFP3 and AFP4. As to expression, predominantly expressed in seeds.

The protein localises to the nucleus. Binds to the embryo specification element and the ABA-responsive element (ABRE) of the Dc3 gene promoter and to the ABRE of the Em1 gene promoter. Could participate in abscisic acid-regulated gene expression during seed development. The sequence is that of ABSCISIC ACID-INSENSITIVE 5-like protein 3 (DPBF4) from Arabidopsis thaliana (Mouse-ear cress).